The chain runs to 558 residues: uncharacterized protein (558 aa).

Residues 338–354 (STSTSTSTSTSSSNDLN) show a composition bias toward low complexity. Residues 338–380 (STSTSTSTSTSSSNDLNLDSDSDDSDSDDSDSDSDSDSDSEID) are disordered. Positions 355–380 (LDSDSDDSDSDDSDSDSDSDSDSEID) are enriched in acidic residues.

It is found in the plastid. This is an uncharacterized protein from Euglena longa (Euglenophycean alga).